The sequence spans 222 residues: Beta-amylase (222 aa).

Thr36 provides a ligand contact to substrate. Glu74 functions as the Proton acceptor in the catalytic mechanism. Substrate is bound by residues Asn75–Ala76 and Arg114.

Belongs to the glycosyl hydrolase 14 family.

The enzyme catalyses Hydrolysis of (1-&gt;4)-alpha-D-glucosidic linkages in polysaccharides so as to remove successive maltose units from the non-reducing ends of the chains.. This Secale cereale (Rye) protein is Beta-amylase (BMY1).